The primary structure comprises 397 residues: MSDTLLNPYFGEFGGMYVPEILVPVLKQLEQAFVEAQNDPTFQAEFADLLKNYAGRPTALTLCRNLTKGTKTKLYLKREDLLHGGAHKTNQVLGQILLAKRMGKTRIIAETGAGQHGVATALACAMLDMPCRVYMGAKDVERQSPNVFRMRLMGAEVIPVQKGSCSLKDACCEAMRDWSANYETTHYLLGTAAGPHPFPTIVREFQKMIGEETKRQILEREGRLPDTVIAAVGGGSNAIGMFADFIDESNVRLIGVEPAGKGIETGEHGAPLKHGTTGIYFGMKSPIMQDKDGQIEESYSISAGLDFPSVGPQHAYLNEIGRADYVSITDEEALNAFQELAKHEGIIPALESSHALAYALKLIKQNPEKEQLLVVNLSGRGDKDIFTVDKILNGGAN.

K88 is subject to N6-(pyridoxal phosphate)lysine.

It belongs to the TrpB family. Tetramer of two alpha and two beta chains. It depends on pyridoxal 5'-phosphate as a cofactor.

The catalysed reaction is (1S,2R)-1-C-(indol-3-yl)glycerol 3-phosphate + L-serine = D-glyceraldehyde 3-phosphate + L-tryptophan + H2O. The protein operates within amino-acid biosynthesis; L-tryptophan biosynthesis; L-tryptophan from chorismate: step 5/5. Functionally, the beta subunit is responsible for the synthesis of L-tryptophan from indole and L-serine. This chain is Tryptophan synthase beta chain (trpB), found in Haemophilus influenzae (strain ATCC 51907 / DSM 11121 / KW20 / Rd).